The primary structure comprises 427 residues: Serine protease HTRA2, mitochondrial (427 aa).

Residues His33 to Ser57 form a disordered region. A helical membrane pass occupies residues Val67 to Gly87. Residues Ala78–Ser81 carry the IAP-binding motif. The interval Ser144–Leu307 is serine protease. Residues His162, Asp194, and Ser271 each act as charge relay system in the active site. The PDZ domain maps to Met330–Val415.

This sequence belongs to the peptidase S1C family. As to quaternary structure, interacts with th/DIAP1 (via BIR 2 domain).

Its subcellular location is the mitochondrion intermembrane space. It is found in the mitochondrion membrane. It catalyses the reaction Cleavage of non-polar aliphatic amino-acids at the P1 position, with a preference for Val, Ile and Met. At the P2 and P3 positions, Arg is selected most strongly with a secondary preference for other hydrophilic residues.. Functionally, serine protease that shows proteolytic activity against a non-specific substrate beta-casein. Promotes or induces cell death either by direct binding to and inhibition of BIRC proteins (also called inhibitor of apoptosis proteins, IAPs), leading to an increase in caspase activity, or by a BIRC inhibition-independent, caspase-independent and serine protease activity-dependent mechanism. Can antagonize antiapoptotic activity of th/Diap1 by directly inducing the degradation of th/Diap1. The protein is Serine protease HTRA2, mitochondrial of Drosophila persimilis (Fruit fly).